Here is a 349-residue protein sequence, read N- to C-terminus: UDP-3-O-acylglucosamine N-acyltransferase (349 aa).

The Proton acceptor role is filled by His240.

This sequence belongs to the transferase hexapeptide repeat family. LpxD subfamily. In terms of assembly, homotrimer.

The enzyme catalyses a UDP-3-O-[(3R)-3-hydroxyacyl]-alpha-D-glucosamine + a (3R)-hydroxyacyl-[ACP] = a UDP-2-N,3-O-bis[(3R)-3-hydroxyacyl]-alpha-D-glucosamine + holo-[ACP] + H(+). It functions in the pathway bacterial outer membrane biogenesis; LPS lipid A biosynthesis. Catalyzes the N-acylation of UDP-3-O-acylglucosamine using 3-hydroxyacyl-ACP as the acyl donor. Is involved in the biosynthesis of lipid A, a phosphorylated glycolipid that anchors the lipopolysaccharide to the outer membrane of the cell. The chain is UDP-3-O-acylglucosamine N-acyltransferase from Porphyromonas gingivalis (strain ATCC 33277 / DSM 20709 / CIP 103683 / JCM 12257 / NCTC 11834 / 2561).